Reading from the N-terminus, the 239-residue chain is Norbelladine 4'-O-methyltransferase (239 aa).

Residues V55, E77, 79 to 80 (GV), S85, D103, and A132 contribute to the S-adenosyl-L-methionine site. D155 provides a ligand contact to a divalent metal cation. D157 lines the S-adenosyl-L-methionine pocket. 2 residues coordinate a divalent metal cation: D181 and N182.

Belongs to the class I-like SAM-binding methyltransferase superfamily. Cation-dependent O-methyltransferase family. It depends on Mg(2+) as a cofactor. In terms of tissue distribution, highly expressed in bulbs. Detected in leaves and inflorescences.

The catalysed reaction is norbelladine + S-adenosyl-L-methionine = 4'-O-methylnorbelladine + S-adenosyl-L-homocysteine + H(+). It participates in alkaloid biosynthesis. In terms of biological role, 4'-O-methyltransferase converting norbelladine to 4'-O-methylnorbelladine. 4'-O-methylnorbelladine is a precursor to all Amaryllidaceae alkaloids such as galanthamine, lycorine and haemanthamine, and including haemanthamine- and crinamine-type alkaloids, promising anticancer agents. Can use norbelladine, N-methylnorbelladine and dopamine as substrate, but not caffeic acid, vanillin, 3,4-dihydroxybenzaldehyde and tyramine. This is Norbelladine 4'-O-methyltransferase from Narcissus aff. pseudonarcissus MK-2014 (Daffodil).